A 524-amino-acid chain; its full sequence is Coronin-2A (524 aa).

WD repeat units follow at residues 80 to 120 (GHRG…LTRN), 130 to 170 (GHAR…SVIA), 178 to 217 (CHQD…VLQE), 220 to 263 (YKGH…VPLT), and 269 to 308 (GSSG…PHLT). The interval 403-436 (LLDSQTLPPERPLSNSMVQVSPQPLEPMKQPAED) is disordered. Positions 404–424 (LDSQTLPPERPLSNSMVQVSP) are enriched in polar residues. Residues 484-523 (QMFYRQQEEIRRLRELLIQREVQTKQLELEIKNLRMALGQ) are a coiled coil.

This sequence belongs to the WD repeat coronin family. As to quaternary structure, binds actin. Component of the N-Cor repressor complex, at least composed of NCOR1, NCOR2, HDAC3, TBL1X, TBL1R, CORO2A and GPS2.

The polypeptide is Coronin-2A (Coro2a) (Mus musculus (Mouse)).